The primary structure comprises 440 residues: Chromosome partition protein MukF (440 aa).

The segment at 208–236 (LSETSGTLRELQDTLEAAGDKLQANLLRI) is leucine-zipper.

Belongs to the MukF family. Interacts, and probably forms a ternary complex, with MukE and MukB via its C-terminal region. The complex formation is stimulated by calcium or magnesium. It is required for an interaction between MukE and MukB.

The protein resides in the cytoplasm. Its subcellular location is the nucleoid. Involved in chromosome condensation, segregation and cell cycle progression. May participate in facilitating chromosome segregation by condensation DNA from both sides of a centrally located replisome during cell division. Not required for mini-F plasmid partitioning. Probably acts via its interaction with MukB and MukE. Overexpression results in anucleate cells. It has a calcium binding activity. The protein is Chromosome partition protein MukF of Photorhabdus laumondii subsp. laumondii (strain DSM 15139 / CIP 105565 / TT01) (Photorhabdus luminescens subsp. laumondii).